An 834-amino-acid chain; its full sequence is U-box domain-containing protein 33 (834 aa).

Residues F232–D308 are disordered. 2 stretches are compositionally biased toward polar residues: residues S243–N273 and S284–M293. Positions L334–L462 form a coiled coil. One can recognise a Protein kinase domain in the interval F481 to R744. ATP-binding positions include I487 to I495 and K508. The active-site Proton acceptor is D603. The U-box domain occupies I762–L834.

Belongs to the protein kinase superfamily. Ser/Thr protein kinase family.

It catalyses the reaction L-seryl-[protein] + ATP = O-phospho-L-seryl-[protein] + ADP + H(+). The enzyme catalyses L-threonyl-[protein] + ATP = O-phospho-L-threonyl-[protein] + ADP + H(+). It carries out the reaction S-ubiquitinyl-[E2 ubiquitin-conjugating enzyme]-L-cysteine + [acceptor protein]-L-lysine = [E2 ubiquitin-conjugating enzyme]-L-cysteine + N(6)-ubiquitinyl-[acceptor protein]-L-lysine.. The protein operates within protein modification; protein ubiquitination. Functionally, functions as an E3 ubiquitin ligase. The polypeptide is U-box domain-containing protein 33 (PUB33) (Arabidopsis thaliana (Mouse-ear cress)).